The following is a 340-amino-acid chain: Sulfotransferase ppzF (340 aa).

It functions in the pathway secondary metabolite biosynthesis. Sulfotransferase; part of the gene cluster that mediates the biosynthesis of pyrrolopyrazines, secondary metabolites showing insecticidal activity. The role of ppzF within the pathway has still to be determined. The single multifunctional NRPS ppzA is sufficient to produce peramine via condensation of 1-pyrroline-5-carboxylate and arginine, N-methylation of the alpha-amino group of arginine and reduction of the thioester and the cyclization to form an iminium ion resulting in release from the peptide synthetase. Deprotonation of this intermediate and oxidation of the pyrroline ring would give rise to peramine. In Epichloe species that produce only peramine, the peramine synthetase gene is not localized in a gene cluster, in contrast to Metarhizium species that contain additional pyrrolopyrazine biosynthesis genes. The 2-oxoglutarate-Fe(II) type oxidoreductase ppzC hydroxylates peramine to yield the newly identified compound 8-hydroxyperamine whereas ppzD converts L-proline into trans-4-hydroxy-L-proline, a precursor of peramine biosynthesis. In Metarhizium rileyi (strain RCEF 4871) (Nomuraea rileyi), this protein is Sulfotransferase ppzF.